The sequence spans 393 residues: Thermostable carboxypeptidase 2 (393 aa).

Positions 104, 109, and 245 each coordinate Zn(2+). Tyr302 functions as the Proton donor in the catalytic mechanism. The active-site Nucleophile is Glu373.

It belongs to the peptidase M20 family. Homotetramer. Requires Zn(2+) as cofactor.

In terms of biological role, can release basic, acidic, aromatic, and, to a lesser extent, aliphatic amino acids. The chain is Thermostable carboxypeptidase 2 (cpsA2) from Saccharolobus solfataricus (strain ATCC 35092 / DSM 1617 / JCM 11322 / P2) (Sulfolobus solfataricus).